The following is a 389-amino-acid chain: Ecto-ADP-ribosyltransferase 3 (389 aa).

Positions 1–26 (MKTGHFEIVTMLLATMILVDIFQVKA) are cleaved as a signal peptide. Cysteines 43 and 256 form a disulfide. Residues 64 to 251 (QQLDTVWENA…LILQSINKTC (188 aa)) form the TR mART core domain. Y101 and R163 together coordinate NAD(+). Residue N248 is glycosylated (N-linked (GlcNAc...) asparagine). A run of 3 repeats spans residues 283–292 (GEKNQKLEDH), 293–302 (SEKNWKLEDH), and 303–312 (GEKNQKLEDH). The tract at residues 283 to 312 (GEKNQKLEDHSEKNWKLEDHGEKNQKLEDH) is 3 X 10 AA tandem repeats of [GS]-E-K-N-[QW]-K-L-E-D-H. A disordered region spans residues 325–362 (MKIPEPFPLPEDKSQGNINNPTPGPVPVPGPKSHPSAS). A glycan (O-linked (GalNAc...) threonine) is linked at T346. Residues 346–356 (TPGPVPVPGPK) are compositionally biased toward pro residues. S362 carries the GPI-anchor amidated serine lipid modification. The propeptide at 363–389 (SGKLLLPQFGMVIILISVSAINLFVAL) is removed in mature form.

Belongs to the Arg-specific ADP-ribosyltransferase family. O-glycosylated with core 1 or possibly core 8 glycans. Testis specific.

Its subcellular location is the cell membrane. It carries out the reaction L-arginyl-[protein] + NAD(+) = N(omega)-(ADP-D-ribosyl)-L-arginyl-[protein] + nicotinamide + H(+). This chain is Ecto-ADP-ribosyltransferase 3 (ART3), found in Homo sapiens (Human).